We begin with the raw amino-acid sequence, 865 residues long: DNA-directed RNA polymerase subunit Rpo1N (865 aa).

Residues Cys-60, Cys-63, Cys-70, His-73, Cys-100, Cys-103, Cys-146, and Cys-149 each contribute to the Zn(2+) site. Positions 451, 453, and 455 each coordinate Mg(2+). Residues 500–531 (EHTSSQGKRLFSVRSRPPDPQEGRAPPPDREG) form a disordered region. Over residues 515–531 (RPPDPQEGRAPPPDREG) the composition is skewed to basic and acidic residues.

The protein belongs to the RNA polymerase beta' chain family. In terms of assembly, part of the RNA polymerase complex. The cofactor is Mg(2+). Zn(2+) is required as a cofactor.

It is found in the cytoplasm. The enzyme catalyses RNA(n) + a ribonucleoside 5'-triphosphate = RNA(n+1) + diphosphate. DNA-dependent RNA polymerase (RNAP) catalyzes the transcription of DNA into RNA using the four ribonucleoside triphosphates as substrates. Forms the clamp head domain. In Methanothermobacter thermautotrophicus (strain Winter) (Methanobacterium thermoautotrophicum), this protein is DNA-directed RNA polymerase subunit Rpo1N.